Reading from the N-terminus, the 867-residue chain is Dynamin-1 (867 aa).

The Dynamin-type G domain maps to 28-294 (DLDLPQIAVV…LTNHIRDTLP (267 aa)). A G1 motif region spans residues 38 to 45 (GGQSAGKS). GDP-binding residues include Ser41, Gly43, Lys44, Ser45, Ser46, Arg59, and Gly60. A G2 motif region spans residues 64 to 66 (VTR). A Phosphotyrosine modification is found at Tyr80. At Tyr125 the chain carries 3'-nitrotyrosine; alternate. Tyr125 is subject to Phosphotyrosine; alternate. A G3 motif region spans residues 136–139 (DLPG). Residues 205–208 (TKLD) are G4 motif. Positions 206, 208, 211, 236, 237, and 239 each coordinate GDP. Residues 235-238 (VNRS) are G5 motif. Residues Ser306 and Ser347 each carry the phosphoserine modification. Position 354 is a phosphotyrosine (Tyr354). Ser512 is subject to Phosphoserine. The PH domain occupies 515 to 625 (QDEILVIRKG…WKASFLRAGV (111 aa)). The region spanning 659–750 (VETIRNLVDS…IIGDINTTTV (92 aa)) is the GED domain. Residues 767–867 (SVPAGRRSPT…HENRAGKARL (101 aa)) form a disordered region. 2 positions are modified to phosphoserine: Ser774 and Ser778. Arg796 is subject to Omega-N-methylarginine. A Phosphoserine modification is found at Ser822. Over residues 825-843 (PFGPPPQVPSRPNRAPPGV) the composition is skewed to pro residues. A phosphoserine mark is found at Gly847, Leu851, and Lys857. The segment covering 856–867 (GKHENRAGKARL) has biased composition (basic and acidic residues).

Belongs to the TRAFAC class dynamin-like GTPase superfamily. Dynamin/Fzo/YdjA family. Homodimer; homodimerization is mediated by the dynamin-type G domain which promotes assembly-stimulated GTPase activity. Homo-tetramer formed from two dimers in the absence of lipid. Oligomerizes into a helical polymer that self-assembles around the vesicle membrane, when associated to the menbrane through lipid binding. Interacts (via C-terminal proline-rich domain (PRD)) with SNX9 (via SH3 domain); this interaction allows regulation of DNM1 self-assembly during late stages of endocytic vesicle formation and supports DNM1's early functions in accelerating clathrin-coated pits (CCPs) maturation in non neuronals cell. Interacts (via C-terminal proline-rich domain (PRD)) with MYO1E (via SH3 domain); this interaction regulates receptor-mediated endocytosis. Interacts with SNX33 (via SH3 domain); this interaction decreases DNM1-dependent endocytosis. Interacts with DIAPH1. Interacts with GRB2 (via SH3 domain); this interaction mediates disassembly of DNM1 polymers, therefore modulates self-assembly. Forms a complex with BIN1 (via SH3 domain) and SH3GL2 (via SH3 domain). Forms a complex with SH3GL2 (via SH3 domain) and AMPH (via SH3 domain). Forms a complex with SH3GL2 (via SH3 domain) and SYNJ1. Interacts (via C-terminal proline-rich domain (PRD)) with SYT1; this interaction facilitates vesicle fission during clathrin-mediated endocytosis (CME). Interacts (via C-terminal proline-rich domain (PRD)) with PLCG1 (via SH3 domain); this interaction stimulates the release of GDP from DNM1 and enhances DNM1-dependent endocytosis. Interacts with SNPH; this interaction inhibits the binding of DNM1 to AMPH and DNM1-receptor-mediated endocytosis. Interacts with CAV1. Interacts with SH3GLB1 (via SH3 domain). Interacts with PACSIN1 (via SH3 domain), PACSIN2 (via SH3 domain) and PACSIN3 (via SH3 domain). Interacts with UNC119; this interaction decreases DNM1's GTPase activity and affects DNM1's interaction with AMPH. Interacts with AMPH. Interacts (GTP-bound form) with DNAJC6; this interaction allows clathrin-coated vesicle (CCV) formation at the plasma membrane. Phosphorylation at Ser-774 by GSK3B/GSK3-beta leads to inactivation of receptor-mediated endocytosis in non-neuronal cells. Dephosphorylation at Ser-774, through the EGFR downstream signaling, leads to activation and regulates early stages of clathrin-mediated endocytosis (CME). Phosphorylated on Tyr in response to EGF stimulation in cells expressing truncated EGFR. Phosphorylated by CDK5 leading to synaptic vesicle endocytosis (SVE) activation. In terms of tissue distribution, expressed exclusively in the brain.

The protein localises to the cell membrane. It localises to the membrane. It is found in the clathrin-coated pit. The protein resides in the cytoplasmic vesicle. Its subcellular location is the presynapse. The protein localises to the secretory vesicle. It localises to the chromaffin granule. The enzyme catalyses GTP + H2O = GDP + phosphate + H(+). Catalyzes the hydrolysis of GTP and utilizes this energy to mediate vesicle scission and participates in many forms of endocytosis, such as clathrin-mediated endocytosis or synaptic vesicle endocytosis as well as rapid endocytosis (RE). Associates to the membrane, through lipid binding, and self-assembles into rings and stacks of interconnected rings through oligomerization to form a helical polymer around the vesicle membrane leading to constriction of invaginated coated pits around their necks. Self-assembly of the helical polymer induces membrane tubules narrowing until the polymer reaches a length sufficient to trigger GTP hydrolysis. Depending on the curvature imposed on the tubules, membrane detachment from the helical polymer upon GTP hydrolysis can cause spontaneous hemifission followed by complete fission. May play a role in regulating early stages of clathrin-mediated endocytosis in non-neuronal cells through its activation by dephosphorylation via the signaling downstream of EGFR. Controls vesicle size at a step before fission, during formation of membrane pits, at hippocampal synapses. Controls plastic adaptation of the synaptic vesicle recycling machinery to high levels of activity. Mediates rapid endocytosis (RE), a Ca(2+)-dependent and clathrin- and K(+)-independent process in chromaffin cells. Microtubule-associated force-producing protein involved in producing microtubule bundles and able to bind and hydrolyze GTP. Through its interaction with DNAJC6, acts during the early steps of clathrin-coated vesicle (CCV) formation. The polypeptide is Dynamin-1 (Mus musculus (Mouse)).